The chain runs to 119 residues: Large ribosomal subunit protein bL12 (119 aa).

It belongs to the bacterial ribosomal protein bL12 family. In terms of assembly, homodimer. Part of the ribosomal stalk of the 50S ribosomal subunit. Forms a multimeric L10(L12)X complex, where L10 forms an elongated spine to which 2 to 4 L12 dimers bind in a sequential fashion. Binds GTP-bound translation factors.

In terms of biological role, forms part of the ribosomal stalk which helps the ribosome interact with GTP-bound translation factors. Is thus essential for accurate translation. The polypeptide is Large ribosomal subunit protein bL12 (Bacillus anthracis (strain A0248)).